We begin with the raw amino-acid sequence, 666 residues long: Endogenous retrovirus group K member 9 Gag polyprotein (666 aa).

A lipid anchor (N-myristoyl glycine) is attached at Gly-2. Residues 165-264 (GKGPELVGPS…APPSRQGSEL (100 aa)) form a disordered region. The span at 232–247 (GMPPAPQGRAPYPQPP) shows a compositional bias: pro residues. CCHC-type zinc fingers lie at residues 544-561 (GKCY…NCPV) and 580-597 (DLCP…QCRS). Residues 598–641 (KFDKNGQPLSGNEQRGQPQAPQQTGAFPIQPFVPQGFQGQQPPL) are disordered. Polar residues predominate over residues 604 to 622 (QPLSGNEQRGQPQAPQQTG). A compositionally biased stretch (low complexity) spans 624-640 (FPIQPFVPQGFQGQQPP).

Belongs to the beta type-B retroviral Gag protein family. HERV class-II K(HML-2) gag subfamily. In terms of processing, myristoylation is essential for retroviral assembly. Alteration of the glycine residue leads to a block in the budding of particles and an accumulation of Gag inside the cell. Post-translationally, specific enzymatic cleavages may yield mature proteins.

It localises to the cell membrane. Its function is as follows. The products of the Gag polyproteins of infectious retroviruses perform highly complex orchestrated tasks during the assembly, budding, maturation, and infection stages of the viral replication cycle. During viral assembly, the proteins form membrane associations and self-associations that ultimately result in budding of an immature virion from the infected cell. Gag precursors also function during viral assembly to selectively bind and package two plus strands of genomic RNA. Endogenous Gag proteins may have kept, lost or modified their original function during evolution. This Homo sapiens (Human) protein is Endogenous retrovirus group K member 9 Gag polyprotein (ERVK-9).